Here is a 372-residue protein sequence, read N- to C-terminus: Protein-glutamate methylesterase/protein-glutamine glutaminase (372 aa).

Residues 5–123 enclose the Response regulatory domain; that stretch reads RVLIVDDSAL…SANLTTVSET (119 aa). At Asp56 the chain carries 4-aspartylphosphate. The span at 140–151 shows a compositional bias: polar residues; the sequence is GTRSTDTTNSFS. The interval 140 to 177 is disordered; sequence GTRSTDTTNSFSEPFKSTIPKPMTAAEPQKEEKPTPQR. The segment covering 167 to 177 has biased composition (basic and acidic residues); sequence PQKEEKPTPQR. A CheB-type methylesterase domain is found at 178 to 364; that stretch reads EHGNIQIIAI…VSLDNMAAAI (187 aa). Catalysis depends on residues Ser190, His217, and Asp313.

It belongs to the CheB family. Post-translationally, phosphorylated by CheA. Phosphorylation of the N-terminal regulatory domain activates the methylesterase activity.

Its subcellular location is the cytoplasm. The enzyme catalyses [protein]-L-glutamate 5-O-methyl ester + H2O = L-glutamyl-[protein] + methanol + H(+). It carries out the reaction L-glutaminyl-[protein] + H2O = L-glutamyl-[protein] + NH4(+). Its function is as follows. Involved in chemotaxis. Part of a chemotaxis signal transduction system that modulates chemotaxis in response to various stimuli. Catalyzes the demethylation of specific methylglutamate residues introduced into the chemoreceptors (methyl-accepting chemotaxis proteins or MCP) by CheR. Also mediates the irreversible deamidation of specific glutamine residues to glutamic acid. This Treponema denticola (strain ATCC 35405 / DSM 14222 / CIP 103919 / JCM 8153 / KCTC 15104) protein is Protein-glutamate methylesterase/protein-glutamine glutaminase.